A 210-amino-acid chain; its full sequence is MKGKFIVIEGLEGAGKSSAHQSVVRVLHELGIQDVVFTREPGGTPLAEKLRHLIKHETEEPVTDKAELLMLYAARIQLVENVIKPALMQGKWVVGDRHDMSSQAYQGGGRQLDPHFMLTLKETVLGNFEPDLTIYLDIDPSVGLARARGRGELDRIEQMDLDFFHRTRARYLELVKDNPKAVVINAEQSIELVQADIESAVKNWWKSNEK.

10–17 (GLEGAGKS) is a binding site for ATP.

The protein belongs to the thymidylate kinase family.

It carries out the reaction dTMP + ATP = dTDP + ADP. In terms of biological role, phosphorylation of dTMP to form dTDP in both de novo and salvage pathways of dTTP synthesis. This Haemophilus influenzae (strain ATCC 51907 / DSM 11121 / KW20 / Rd) protein is Thymidylate kinase (tmk).